The chain runs to 80 residues: Protein UL148A (80 aa).

Residues 10 to 30 (WIPVCVVVVMTSVVLFAGLHV) form a helical membrane-spanning segment.

It is found in the host membrane. Plays a role in the down-regulation of the host NKG2D ligand MICA by utilizing the lysosomal pathway for its degradation. In turn, MICA reduction diminishes NK-cell killing of HCMV-infected cells. The polypeptide is Protein UL148A (UL148A) (Human cytomegalovirus (strain Merlin) (HHV-5)).